The primary structure comprises 1004 residues: Glutamate [NMDA] receptor subunit 1 (1004 aa).

Residues 1–39 form the signal peptide; it reads MAGTDSPAAARFVYRCLLFAPAIVVGLLLPLTLPPIAAA. Topologically, residues 40–585 are extracellular; that stretch reads QRHTASDNPS…TLVSFLQPFS (546 aa). 7 N-linked (GlcNAc...) asparagine glycosylation sites follow: Asn270, Asn326, Asn357, Asn409, Asn466, Asn493, and Asn513. Residues 542–544 and Arg549 each bind glycine; that span reads PLT. A helical transmembrane segment spans residues 586–606; it reads NTLWILVMVSVHVVALVLYLL. The Cytoplasmic segment spans residues 607-663; sequence DRFSPFGRFKLSHSDSNEEKALNLSSAVWFAWGVLLNSGIGEGTPRSFSARVLGMVW. Residues 664-684 form a helical membrane-spanning segment; that stretch reads AGFAMIIVASYTANLAAFLVL. The Extracellular segment spans residues 685 to 843; the sequence is ERPKTKLSGI…KTPNTLGLKN (159 aa). Asn705 carries N-linked (GlcNAc...) asparagine glycosylation. Glycine contacts are provided by Ser715 and Asp759. Residues 844 to 864 traverse the membrane as a helical segment; sequence MAGVFILVGVGIAGGVGLIII. At 865–1004 the chain is on the cytoplasmic side; sequence EVIYKKHQVK…YTSDVSHLVV (140 aa). The interval 980-1004 is disordered; the sequence is TRPQQNILPPRYSPGYTSDVSHLVV. The span at 994–1004 shows a compositional bias: polar residues; that stretch reads GYTSDVSHLVV.

It belongs to the glutamate-gated ion channel (TC 1.A.10.1) family. Forms a heteromeric NMDA channel with Nmdar2.

It localises to the cell membrane. Its subcellular location is the postsynaptic cell membrane. The protein resides in the postsynaptic density. Its function is as follows. NMDA receptor subtype of glutamate-gated ion channels with high calcium permeability and voltage-dependent sensitivity to magnesium. Mediated by glycine. This protein plays a key role in synaptic plasticity, synaptogenesis, excitotoxicity, memory acquisition and learning. It mediates neuronal functions in glutamate neurotransmission. Is involved in the cell surface targeting of NMDA receptors. Plays a role in associative learning and in long-term memory consolidation. The polypeptide is Glutamate [NMDA] receptor subunit 1 (Drosophila pseudoobscura pseudoobscura (Fruit fly)).